A 159-amino-acid chain; its full sequence is Large ribosomal subunit protein uL10 (159 aa).

It belongs to the universal ribosomal protein uL10 family. In terms of assembly, part of the ribosomal stalk of the 50S ribosomal subunit. The N-terminus interacts with L11 and the large rRNA to form the base of the stalk. The C-terminus forms an elongated spine to which L12 dimers bind in a sequential fashion forming a multimeric L10(L12)X complex.

Its function is as follows. Forms part of the ribosomal stalk, playing a central role in the interaction of the ribosome with GTP-bound translation factors. The protein is Large ribosomal subunit protein uL10 of Campylobacter lari (strain RM2100 / D67 / ATCC BAA-1060).